The chain runs to 105 residues: Death-associated protein 1 homolog (105 aa).

The interval 75 to 105 is disordered; sequence AAQVAHQKPVPSAQKLPAGQHLNQHIHQPRK. Residues 95-105 are compositionally biased toward polar residues; that stretch reads HLNQHIHQPRK.

This sequence belongs to the DAP-DAPL1 family. Associates with ribosomes; inhibiting translation. Interacts with eiF5a (eif5a and eif5a2); inhibiting translation.

In terms of biological role, ribosome-binding protein involved in ribosome hibernation, a process during which ribosomes are stabilized in an inactive state and preserved from proteasomal degradation. Acts via its association with eiF5a (eif5a and eif5a2) at the polypeptide exit tunnel of the ribosome, preventing mRNA translation. Involved in ribosome hibernation in the mature egg by preventing mRNA translation, leading to ribosome inactivation. Ribosomes, which are produced in large quantities during oogenesis, are stored and translationally repressed in the egg and early embryo. Compared to dap1b, binds and inactivates ribosomes less efficiently. This is Death-associated protein 1 homolog from Danio rerio (Zebrafish).